The primary structure comprises 213 residues: Imidazole glycerol phosphate synthase subunit HisH 2 (213 aa).

Residues 4-211 (RLGLIDYGMG…LNWLETGAKP (208 aa)) enclose the Glutamine amidotransferase type-1 domain. C82 serves as the catalytic Nucleophile. Residues H186 and E188 contribute to the active site.

In terms of assembly, heterodimer of HisH and HisF.

Its subcellular location is the cytoplasm. It carries out the reaction 5-[(5-phospho-1-deoxy-D-ribulos-1-ylimino)methylamino]-1-(5-phospho-beta-D-ribosyl)imidazole-4-carboxamide + L-glutamine = D-erythro-1-(imidazol-4-yl)glycerol 3-phosphate + 5-amino-1-(5-phospho-beta-D-ribosyl)imidazole-4-carboxamide + L-glutamate + H(+). It catalyses the reaction L-glutamine + H2O = L-glutamate + NH4(+). It functions in the pathway amino-acid biosynthesis; L-histidine biosynthesis; L-histidine from 5-phospho-alpha-D-ribose 1-diphosphate: step 5/9. Functionally, IGPS catalyzes the conversion of PRFAR and glutamine to IGP, AICAR and glutamate. The HisH subunit provides the glutamine amidotransferase activity that produces the ammonia necessary to HisF for the synthesis of IGP and AICAR. The polypeptide is Imidazole glycerol phosphate synthase subunit HisH 2 (hisH2) (Prochlorococcus marinus (strain MIT 9313)).